The following is a 712-amino-acid chain: DNA ligase (712 aa).

Residues 53–57 (DAEFD), 103–104 (SL), and E133 each bind NAD(+). K135 acts as the N6-AMP-lysine intermediate in catalysis. R156, E196, K315, and K339 together coordinate NAD(+). Zn(2+)-binding residues include C433, C436, C452, and C458. The BRCT domain occupies 622 to 711 (SIERTLEGLS…PERDAEDGEP (90 aa)).

The protein belongs to the NAD-dependent DNA ligase family. LigA subfamily. Requires Mg(2+) as cofactor. Mn(2+) is required as a cofactor.

The enzyme catalyses NAD(+) + (deoxyribonucleotide)n-3'-hydroxyl + 5'-phospho-(deoxyribonucleotide)m = (deoxyribonucleotide)n+m + AMP + beta-nicotinamide D-nucleotide.. In terms of biological role, DNA ligase that catalyzes the formation of phosphodiester linkages between 5'-phosphoryl and 3'-hydroxyl groups in double-stranded DNA using NAD as a coenzyme and as the energy source for the reaction. It is essential for DNA replication and repair of damaged DNA. This chain is DNA ligase, found in Mycolicibacterium gilvum (strain PYR-GCK) (Mycobacterium gilvum (strain PYR-GCK)).